The chain runs to 92 residues: RNA-binding protein Hfq (92 aa).

The region spanning 9–68 is the Sm domain; the sequence is DPFLNALRRERVPVSIYLVNGIKLQGQVESFDQFVILLKNTVSQMVYKHAISTVVPSRPF.

It belongs to the Hfq family. Homohexamer.

RNA chaperone that binds small regulatory RNA (sRNAs) and mRNAs to facilitate mRNA translational regulation in response to envelope stress, environmental stress and changes in metabolite concentrations. Also binds with high specificity to tRNAs. This is RNA-binding protein Hfq from Shewanella halifaxensis (strain HAW-EB4).